The following is a 507-amino-acid chain: E3 SUMO-protein ligase PIAS4 (507 aa).

Ala2 is modified (N-acetylalanine). Lys9 is covalently cross-linked (Glycyl lysine isopeptide (Lys-Gly) (interchain with G-Cter in SUMO2)). Positions 12–46 (VMSFRVSDLQMLLGFVGRSKSGLKHELVTRALQLV) constitute an SAP domain. The short motif at 20 to 24 (LQMLL) is the LXXLL motif element. Lys35 participates in a covalent cross-link: Glycyl lysine isopeptide (Lys-Gly) (interchain with G-Cter in SUMO); alternate. Residue Lys35 forms a Glycyl lysine isopeptide (Lys-Gly) (interchain with G-Cter in SUMO2); alternate linkage. Residues Lys56, Lys59, Lys68, and Lys69 each participate in a glycyl lysine isopeptide (Lys-Gly) (interchain with G-Cter in SUMO2) cross-link. The residue at position 107 (Lys107) is an N6-acetyllysine. A PINIT domain is found at 112–272 (LGRLPTKTLK…SVALYLVRQL (161 aa)). Lys118 participates in a covalent cross-link: Glycyl lysine isopeptide (Lys-Gly) (interchain with G-Cter in SUMO2). A Glycyl lysine isopeptide (Lys-Gly) (interchain with G-Cter in SUMO) cross-link involves residue Lys128. The SP-RING-type zinc finger occupies 304–385 (PDSEIATTGV…LSKILSECEG (82 aa)). Zn(2+) is bound by residues Cys335, His337, Cys358, and Cys361. The disordered stretch occupies residues 426 to 507 (APASSTPGIG…PFQKGLVPAC (82 aa)). Positions 434–450 (IGSGLSGPGSAGSGAGA) are enriched in gly residues. A compositionally biased stretch (acidic residues) spans 474 to 489 (SEDEDEDEDDDEDEDE).

It belongs to the PIAS family. In terms of assembly, interacts with AR, GATA2, LEF1, TP53 and STAT1 (IFNG-induced). Interacts with TICAM1. Interacts with MTA1. Interacts with PRDM1/Blimp-1. Interacts with TRIM32 upon treatment with UVB and TNF-alpha. (Microbial infection) Interacts ewith Moloney murine leukemia virus Capsid protein p30. Sumoylated. Lys-35 is the main site of sumoylation. Sumoylation is required for TCF4 sumoylation and transcriptional activation. Represses LEF1 transcriptional activity. SUMO1 is the preferred conjugate. Post-translationally, ubiquitinated by TRIM32 upon treatment with UVB and TNF-alpha. Widely expressed, with highest levels in testis. Also expressed in vascular endothelial cells, in primary keratinocytes and in the CNS, including cortex, olfactory bulb, spinal cord, thalamus and trigeminal ganglion. Low expression, if any, in liver and lung.

It localises to the nucleus. The protein localises to the PML body. It carries out the reaction S-ubiquitinyl-[E2 ubiquitin-conjugating enzyme]-L-cysteine + [acceptor protein]-L-lysine = [E2 ubiquitin-conjugating enzyme]-L-cysteine + N(6)-ubiquitinyl-[acceptor protein]-L-lysine.. It functions in the pathway protein modification; protein sumoylation. Functions as an E3-type small ubiquitin-like modifier (SUMO) ligase, stabilizing the interaction between UBE2I and the substrate, and as a SUMO-tethering factor. Mediates sumoylation of ALKBH5, AXIN1, CEBPA, KLF8, GATA2, PARK7, HERC2, MYB, TCF4 and RNF168. Plays a crucial role as a transcriptional coregulation in various cellular pathways, including the STAT pathway, the p53/TP53 pathway, the Wnt pathway and the steroid hormone signaling pathway. Involved in gene silencing. In Wnt signaling, represses LEF1 and enhances TCF4 transcriptional activities through promoting their sumoylations. Enhances the sumoylation of MTA1 and may participate in its paralog-selective sumoylation. Binds to AT-rich DNA sequences, known as matrix or scaffold attachment regions (MARs/SARs). Catalyzes conjugation of SUMO2 to KAT5 in response to DNA damage, facilitating repair of DNA double-strand breaks (DSBs) via homologous recombination (HR). Mediates sumoylation of PARP1 in response to PARP1 trapping to chromatin. Mediates sumoylation of KLF8, repressiing KLF8 transcriptional activity and cell cycle progression into G(1) phase. Sumoylates ALKBH5 downstream of MAPK8/JNK1 and MAPK9/JNK2 in response to reactive oxygen species (ROS), inhibiting ALKBH5 RNA demethylase activity. In Mus musculus (Mouse), this protein is E3 SUMO-protein ligase PIAS4 (Pias4).